The sequence spans 166 residues: uncharacterized protein (166 aa).

3 consecutive 4Fe-4S ferredoxin-type domains span residues 3–33 (MKKIIMTNFNCDNCGDCVKACMEKNKVGRIA), 37–67 (KDGKYIPIVCQHCASAPCKEVCPVSAIEHKD), and 68–97 (GYVYLNEDVCIGCGLCALACPFGAILMEDK). 16 residues coordinate [4Fe-4S] cluster: Cys-13, Cys-16, Cys-19, Cys-23, Cys-46, Cys-49, Cys-54, Cys-58, Cys-77, Cys-80, Cys-83, Cys-87, Cys-101, Cys-104, Cys-111, and Cys-115.

Requires [4Fe-4S] cluster as cofactor.

This is an uncharacterized protein from Methanocaldococcus jannaschii (strain ATCC 43067 / DSM 2661 / JAL-1 / JCM 10045 / NBRC 100440) (Methanococcus jannaschii).